A 566-amino-acid polypeptide reads, in one-letter code: E3 ubiquitin-protein ligase RNF220 (566 aa).

Lysine 277 participates in a covalent cross-link: Glycyl lysine isopeptide (Lys-Gly) (interchain with G-Cter in SUMO2). The tract at residues 277–297 is disordered; it reads KREGESPTASPHSSATDDLHH. Position 390 is a phosphoserine (serine 390). The stretch at 485–513 forms a coiled coil; it reads EDSAVTTFEALKARVRELERQLSRGDRYK. The tract at residues 514–522 is required for targeting to the cytoplasm; that stretch reads CLICMDSYS. Residues 514–553 form an RING-type zinc finger; that stretch reads CLICMDSYSMPLTSIQCWHVHCEECWLRTLGAKKLCPQCY.

As to quaternary structure, interacts with SIN3B. Interacts with CTNNB1 (via Armadillo repeats 2-8). Interacts with USP7 (via MATH domain). In terms of processing, auto-ubiquitinated; leads to proteasomal degradation.

The protein localises to the cytoplasm. The enzyme catalyses S-ubiquitinyl-[E2 ubiquitin-conjugating enzyme]-L-cysteine + [acceptor protein]-L-lysine = [E2 ubiquitin-conjugating enzyme]-L-cysteine + N(6)-ubiquitinyl-[acceptor protein]-L-lysine.. Its pathway is protein modification; protein ubiquitination. Its function is as follows. E3 ubiquitin-protein ligase that promotes the ubiquitination and proteasomal degradation of SIN3B. Independently of its E3 ligase activity, acts as a CTNNB1 stabilizer through USP7-mediated deubiquitination of CTNNB1 promoting Wnt signaling. In Bos taurus (Bovine), this protein is E3 ubiquitin-protein ligase RNF220 (RNF220).